The following is a 434-amino-acid chain: UPF0597 protein CLD_2616 (434 aa).

Belongs to the UPF0597 family.

This chain is UPF0597 protein CLD_2616, found in Clostridium botulinum (strain Okra / Type B1).